The following is a 390-amino-acid chain: Sorting nexin C1711.11 (390 aa).

One can recognise a PX domain in the interval 1 to 123 (MLKCTIKNEQ…QFLENNSWKS (123 aa)). A 1,2-diacyl-sn-glycero-3-phospho-(1D-myo-inositol-3-phosphate)-binding residues include Arg-44, Lys-70, and Arg-89.

Belongs to the sorting nexin family.

The protein localises to the cytoplasm. It localises to the membrane. This Schizosaccharomyces pombe (strain 972 / ATCC 24843) (Fission yeast) protein is Sorting nexin C1711.11.